The following is a 344-amino-acid chain: 4-dimethylallyltryptophan N-methyltransferase easF (344 aa).

The protein belongs to the methyltransferase superfamily. As to quaternary structure, homodimer.

The enzyme catalyses 4-(3-methylbut-2-enyl)-L-tryptophan + S-adenosyl-L-methionine = 4-(3-methylbut-2-enyl)-L-abrine + S-adenosyl-L-homocysteine + H(+). It participates in alkaloid biosynthesis; ergot alkaloid biosynthesis. Functionally, 4-dimethylallyltryptophan N-methyltransferase; part of the gene cluster that mediates the biosynthesis of fungal ergot alkaloid. DmaW catalyzes the first step of ergot alkaloid biosynthesis by condensing dimethylallyl diphosphate (DMAP) and tryptophan to form 4-dimethylallyl-L-tryptophan. The second step is catalyzed by the methyltransferase easF that methylates 4-dimethylallyl-L-tryptophan in the presence of S-adenosyl-L-methionine, resulting in the formation of 4-dimethylallyl-L-abrine. The catalase easC and the FAD-dependent oxidoreductase easE then transform 4-dimethylallyl-L-abrine to chanoclavine-I which is further oxidized by easD in the presence of NAD(+), resulting in the formation of chanoclavine-I aldehyde. Agroclavine dehydrogenase easG then mediates the conversion of chanoclavine-I aldehyde to agroclavine via a non-enzymatic adduct reaction: the substrate is an iminium intermediate that is formed spontaneously from chanoclavine-I aldehyde in the presence of glutathione. The presence of easA is not required to complete this reaction. Further conversion of agroclavine to paspalic acid is a two-step process involving oxidation of agroclavine to elymoclavine and of elymoclavine to paspalic acid, the second step being performed by the elymoclavine oxidase cloA. Paspalic acid is then further converted to D-lysergic acid. Ergopeptines are assembled from D-lysergic acid and three different amino acids by the D-lysergyl-peptide-synthetases composed each of a monomudular and a trimodular nonribosomal peptide synthetase subunit. LpsB and lpsC encode the monomodular subunits responsible for D-lysergic acid activation and incorporation into the ergopeptine backbone. LpsA1 and A2 subunits encode the trimodular nonribosomal peptide synthetase assembling the tripeptide portion of ergopeptines. LpsA1 is responsible for formation of the major ergopeptine, ergotamine, and lpsA2 for alpha-ergocryptine, the minor ergopeptine of the total alkaloid mixture elaborated by C.purpurea. D-lysergyl-tripeptides are assembled by the nonribosomal peptide synthetases and released as N-(D-lysergyl-aminoacyl)-lactams. Cyclolization of the D-lysergyl-tripeptides is performed by the Fe(2+)/2-ketoglutarate-dependent dioxygenase easH which introduces a hydroxyl group into N-(D-lysergyl-aminoacyl)-lactam at alpha-C of the aminoacyl residue followed by spontaneous condensation with the terminal lactam carbonyl group. This is 4-dimethylallyltryptophan N-methyltransferase easF from Claviceps purpurea (Ergot fungus).